Here is a 554-residue protein sequence, read N- to C-terminus: Undecaprenyl phosphate-alpha-4-amino-4-deoxy-L-arabinose arabinosyl transferase (554 aa).

The next 11 helical transmembrane spans lie at leucine 4 to isoleucine 24, phenylalanine 87 to leucine 107, phenylalanine 115 to valine 135, phenylalanine 178 to isoleucine 198, leucine 206 to leucine 226, tyrosine 262 to leucine 282, glutamate 293 to glycine 313, leucine 315 to threonine 335, isoleucine 352 to valine 372, glutamine 384 to methionine 404, and histidine 410 to proline 430.

Belongs to the glycosyltransferase 83 family.

It is found in the cell inner membrane. It carries out the reaction 4-amino-4-deoxy-alpha-L-arabinopyranosyl di-trans,octa-cis-undecaprenyl phosphate + lipid IVA = lipid IIA + di-trans,octa-cis-undecaprenyl phosphate.. Its pathway is lipopolysaccharide metabolism; 4-amino-4-deoxy-beta-L-arabinose-lipid A biosynthesis. Catalyzes the transfer of the L-Ara4N moiety of the glycolipid undecaprenyl phosphate-alpha-L-Ara4N to lipid A. The modified arabinose is attached to lipid A and is required for resistance to polymyxin and cationic antimicrobial peptides. The polypeptide is Undecaprenyl phosphate-alpha-4-amino-4-deoxy-L-arabinose arabinosyl transferase (Yersinia enterocolitica serotype O:8 / biotype 1B (strain NCTC 13174 / 8081)).